Here is a 203-residue protein sequence, read N- to C-terminus: Thymidylate kinase (203 aa).

Residue 9–16 (GPEGSGKT) coordinates ATP.

This sequence belongs to the thymidylate kinase family.

The enzyme catalyses dTMP + ATP = dTDP + ADP. In terms of biological role, phosphorylation of dTMP to form dTDP in both de novo and salvage pathways of dTTP synthesis. This Staphylococcus haemolyticus (strain JCSC1435) protein is Thymidylate kinase.